Reading from the N-terminus, the 34-residue chain is Photosystem II reaction center protein M (34 aa).

A helical transmembrane segment spans residues 7–27 (GFVATLLFVLVPAIFLIILYI).

It belongs to the PsbM family. PSII is composed of 1 copy each of membrane proteins PsbA, PsbB, PsbC, PsbD, PsbE, PsbF, PsbH, PsbI, PsbJ, PsbK, PsbL, PsbM, PsbT, PsbX, PsbY, PsbZ, Psb30/Ycf12, peripheral proteins PsbO, CyanoQ (PsbQ), PsbU, PsbV and a large number of cofactors. It forms dimeric complexes.

Its subcellular location is the cellular thylakoid membrane. One of the components of the core complex of photosystem II (PSII). PSII is a light-driven water:plastoquinone oxidoreductase that uses light energy to abstract electrons from H(2)O, generating O(2) and a proton gradient subsequently used for ATP formation. It consists of a core antenna complex that captures photons, and an electron transfer chain that converts photonic excitation into a charge separation. This subunit is found at the monomer-monomer interface. The sequence is that of Photosystem II reaction center protein M from Synechococcus sp. (strain RCC307).